Here is a 122-residue protein sequence, read N- to C-terminus: Large ribosomal subunit protein uL14 (122 aa).

It belongs to the universal ribosomal protein uL14 family. In terms of assembly, part of the 50S ribosomal subunit. Forms a cluster with proteins L3 and L19. In the 70S ribosome, L14 and L19 interact and together make contacts with the 16S rRNA in bridges B5 and B8.

Its function is as follows. Binds to 23S rRNA. Forms part of two intersubunit bridges in the 70S ribosome. In Granulibacter bethesdensis (strain ATCC BAA-1260 / CGDNIH1), this protein is Large ribosomal subunit protein uL14.